We begin with the raw amino-acid sequence, 237 residues long: Phosphoribosylaminoimidazole-succinocarboxamide synthase (237 aa).

The protein belongs to the SAICAR synthetase family.

The enzyme catalyses 5-amino-1-(5-phospho-D-ribosyl)imidazole-4-carboxylate + L-aspartate + ATP = (2S)-2-[5-amino-1-(5-phospho-beta-D-ribosyl)imidazole-4-carboxamido]succinate + ADP + phosphate + 2 H(+). The protein operates within purine metabolism; IMP biosynthesis via de novo pathway; 5-amino-1-(5-phospho-D-ribosyl)imidazole-4-carboxamide from 5-amino-1-(5-phospho-D-ribosyl)imidazole-4-carboxylate: step 1/2. The protein is Phosphoribosylaminoimidazole-succinocarboxamide synthase of Pseudomonas fluorescens (strain Pf0-1).